The chain runs to 171 residues: Glutamyl-tRNA(Gln) amidotransferase subunit F, mitochondrial (171 aa).

This sequence belongs to the GatF family. In terms of assembly, subunit of the heterotrimeric GatFAB amidotransferase (AdT) complex, composed of A, B and F subunits.

It is found in the mitochondrion inner membrane. The enzyme catalyses L-glutamyl-tRNA(Gln) + L-glutamine + ATP + H2O = L-glutaminyl-tRNA(Gln) + L-glutamate + ADP + phosphate + H(+). Functionally, allows the formation of correctly charged Gln-tRNA(Gln) through the transamidation of misacylated Glu-tRNA(Gln) in the mitochondria. The reaction takes place in the presence of glutamine and ATP through an activated gamma-phospho-Glu-tRNA(Gln). Required for proper protein synthesis within the mitochondrion. The chain is Glutamyl-tRNA(Gln) amidotransferase subunit F, mitochondrial from Zygosaccharomyces rouxii (strain ATCC 2623 / CBS 732 / NBRC 1130 / NCYC 568 / NRRL Y-229).